We begin with the raw amino-acid sequence, 436 residues long: Chaperone SurA (436 aa).

An N-terminal signal peptide occupies residues 1–30 (MKFFQRPERRLKQWGLALLLAASALLPARA). 2 PpiC domains span residues 180–281 (ETEY…KLVD) and 291–389 (VTQT…QVLE).

The protein resides in the periplasm. It catalyses the reaction [protein]-peptidylproline (omega=180) = [protein]-peptidylproline (omega=0). In terms of biological role, chaperone involved in the correct folding and assembly of outer membrane proteins. Recognizes specific patterns of aromatic residues and the orientation of their side chains, which are found more frequently in integral outer membrane proteins. May act in both early periplasmic and late outer membrane-associated steps of protein maturation. The sequence is that of Chaperone SurA from Thiobacillus denitrificans (strain ATCC 25259 / T1).